The sequence spans 140 residues: Gas vesicle protein O (140 aa).

Basic and acidic residues predominate over residues 1-14 (MSDQGNEHANHDGI). The interval 1-61 (MSDQGNEHAN…DSTIGLSDAQ (61 aa)) is disordered. The segment covering 39–56 (QTASDEAVSNQSPDSTIG) has biased composition (polar residues).

This sequence belongs to the gas vesicle GvpO family. As to quaternary structure, forms homodimers, forms a GvpN-GvpO heterodimer, interacts with GvpC, GvpF, GvpI and GvpL, might interact with GvpA.

The protein localises to the gas vesicle. Its subcellular location is the cytoplasm. A minor component of the gas vesicle (GV), may play a role in transcription and/or RNA stability and/or in GV assembly. Gas vesicles are small, hollow, gas filled protein structures found in some microorganisms. They allow positioning of halobacteria at the optimal depth for growth in the poorly aerated shallow brine pools of their habitat. Functionally, expression of a 9.5 kb mc-vac DNA fragment containing 2 divergently transcribed regions (gvpD-gvpE-gvpF-gvpG-gvpH-gvpI-gvpJ-gvpK-gvpL-gvpM and gvpA-gvpC-gvpN-gvpO) allows H.volcanii to produce gas vesicles. The protein is Gas vesicle protein O of Haloferax mediterranei (strain ATCC 33500 / DSM 1411 / JCM 8866 / NBRC 14739 / NCIMB 2177 / R-4) (Halobacterium mediterranei).